The primary structure comprises 470 residues: 6-phospho-beta-galactosidase (470 aa).

Q19, H116, N159, E160, and N297 together coordinate D-galactose 6-phosphate. E160 functions as the Proton donor in the catalytic mechanism. The Nucleophile role is filled by E375. The D-galactose 6-phosphate site is built by S430, W431, K437, and Y439.

Belongs to the glycosyl hydrolase 1 family.

The catalysed reaction is a 6-phospho-beta-D-galactoside + H2O = D-galactose 6-phosphate + an alcohol. The protein operates within carbohydrate metabolism; lactose degradation; D-galactose 6-phosphate and beta-D-glucose from lactose 6-phosphate: step 1/1. In Staphylococcus aureus (strain Mu3 / ATCC 700698), this protein is 6-phospho-beta-galactosidase.